The chain runs to 432 residues: Cyclic di-GMP phosphodiesterase CdgJ (432 aa).

Positions 1–232 (MVRCLWAAEC…QRYVSPEHVI (232 aa)) constitute an EAL domain. Positions 226 to 413 (VSPEHVIAMQ…CLELGFDLED (188 aa)) constitute an HDOD domain.

It catalyses the reaction 3',3'-c-di-GMP + H2O = 5'-phosphoguanylyl(3'-&gt;5')guanosine + H(+). Its function is as follows. Phosphodiesterase (PDE) that catalyzes the hydrolysis of cyclic diguanylate (c-di-GMP). Positively regulates motility and negatively regulates biofilm formation. The sequence is that of Cyclic di-GMP phosphodiesterase CdgJ from Vibrio cholerae serotype O1 (strain ATCC 39315 / El Tor Inaba N16961).